The primary structure comprises 97 residues: EVASDDVAAEEAAAAPKIGRRVRVTAPLRVYHVLKAPDLDIQGMEGVVKQYVCVWKGKRVTANFPFKVEFELAVEGQPKPVRFFAHLREDEFEFVDG.

Belongs to the ferredoxin thioredoxin reductase alpha subunit family. As to quaternary structure, heterodimer of subunit A (variable subunit) and subunit B (catalytic subunit). Heterodimeric FTR forms a complex with ferredoxin and thioredoxin.

It localises to the plastid. Its subcellular location is the chloroplast. Its function is as follows. Variable subunit of the ferredoxin-thioredoxin reductase (FTR), which catalyzes the two-electron reduction of thioredoxins by the electrons provided by reduced ferredoxin. The chain is Ferredoxin-thioredoxin reductase, variable chain from Zea mays (Maize).